The chain runs to 219 residues: Sugar fermentation stimulation protein homolog (219 aa).

It belongs to the SfsA family.

This Archaeoglobus fulgidus (strain ATCC 49558 / DSM 4304 / JCM 9628 / NBRC 100126 / VC-16) protein is Sugar fermentation stimulation protein homolog.